The primary structure comprises 180 residues: ATP-dependent protease subunit HslV (180 aa).

The active site involves Thr8. Positions 165, 168, and 171 each coordinate Na(+).

It belongs to the peptidase T1B family. HslV subfamily. A double ring-shaped homohexamer of HslV is capped on each side by a ring-shaped HslU homohexamer. The assembly of the HslU/HslV complex is dependent on binding of ATP.

The protein localises to the cytoplasm. It catalyses the reaction ATP-dependent cleavage of peptide bonds with broad specificity.. Its activity is regulated as follows. Allosterically activated by HslU binding. Protease subunit of a proteasome-like degradation complex believed to be a general protein degrading machinery. The protein is ATP-dependent protease subunit HslV of Staphylococcus saprophyticus subsp. saprophyticus (strain ATCC 15305 / DSM 20229 / NCIMB 8711 / NCTC 7292 / S-41).